The following is a 390-amino-acid chain: Alpha-2B adrenergic receptor (390 aa).

The chain crosses the membrane as a helical span at residues 1 to 25 (AIATVITFLILFTIFGNSLVILAVL). At 26–36 (TSRSLRAPQNL) the chain is on the cytoplasmic side. Residues 37–62 (FLVSLAAADIMVATLIIPFSLANELL) traverse the membrane as a helical segment. Topologically, residues 63-72 (GYWYFRRTWC) are extracellular. Cys-72 and Cys-151 form a disulfide bridge. The chain crosses the membrane as a helical span at residues 73–95 (EVYLALDVLFCTSSIVHLCAISL). Topologically, residues 96 to 117 (DRYWAVSRALEYNSKRTPRRIK) are cytoplasmic. A helical membrane pass occupies residues 118-140 (CIILTVWLIAAAISLPPLIYKGD). The Extracellular segment spans residues 141–156 (QGPQPRGRPQCKLNQE). The helical transmembrane segment at 157-180 (AWYILSSSIGSFFAPCLIMILVYL) threads the bilayer. Residues 181 to 354 (RIYLIAKRSH…LTREKRFTFV (174 aa)) are Cytoplasmic-facing. Disordered stretches follow at residues 191–218 (RRGPGAKGGPRKGESKQPHSLDSGPSAL) and 233–311 (EANG…PLQQ). Acidic residues predominate over residues 280-292 (LEEEADKEEEEEC). The chain crosses the membrane as a helical span at residues 355–378 (LAVVIGVFVLCWFPFFFSYSLGAI). Topologically, residues 379–390 (CPQHCKVPHGLF) are extracellular.

Belongs to the G-protein coupled receptor 1 family. Adrenergic receptor subfamily. ADRA2B sub-subfamily. As to quaternary structure, interacts with RAB26. Interacts with PPP1R9B. Interacts with GGA1, GGA2 and GGA3.

Its subcellular location is the cell membrane. Its function is as follows. Alpha-2 adrenergic receptors mediate the catecholamine-induced inhibition of adenylate cyclase through the action of G proteins. The sequence is that of Alpha-2B adrenergic receptor (ADRA2B) from Dugong dugon (Dugong).